Here is a 413-residue protein sequence, read N- to C-terminus: Peptidase T (413 aa).

His-81 provides a ligand contact to Zn(2+). Asp-83 is an active-site residue. Asp-143 serves as a coordination point for Zn(2+). The Proton acceptor role is filled by Glu-178. Residues Glu-179, Asp-201, and His-383 each coordinate Zn(2+).

It belongs to the peptidase M20B family. The cofactor is Zn(2+).

The protein localises to the cytoplasm. It carries out the reaction Release of the N-terminal residue from a tripeptide.. Functionally, cleaves the N-terminal amino acid of tripeptides. This chain is Peptidase T, found in Lactococcus lactis subsp. hordniae.